Consider the following 29-residue polypeptide: RICPRILMECKADSDCLAQCICQESGFCG.

3 disulfide bridges follow: Cys-3/Cys-20, Cys-10/Cys-22, and Cys-16/Cys-28.

It belongs to the protease inhibitor I7 (squash-type serine protease inhibitor) family.

It localises to the secreted. Its function is as follows. Strongly inhibits trypsin, weakly inhibits chymotrypsin. The polypeptide is Trypsin inhibitor 5 (Cyclanthera pedata (Achocha)).